A 122-amino-acid polypeptide reads, in one-letter code: Ribonuclease P protein component (122 aa).

This sequence belongs to the RnpA family. As to quaternary structure, consists of a catalytic RNA component (M1 or rnpB) and a protein subunit.

It catalyses the reaction Endonucleolytic cleavage of RNA, removing 5'-extranucleotides from tRNA precursor.. Its function is as follows. RNaseP catalyzes the removal of the 5'-leader sequence from pre-tRNA to produce the mature 5'-terminus. It can also cleave other RNA substrates such as 4.5S RNA. The protein component plays an auxiliary but essential role in vivo by binding to the 5'-leader sequence and broadening the substrate specificity of the ribozyme. This Lactobacillus johnsonii (strain CNCM I-12250 / La1 / NCC 533) protein is Ribonuclease P protein component.